Consider the following 296-residue polypeptide: Diguanylate cyclase DgcZ (296 aa).

Residues histidine 22, cysteine 52, histidine 79, and histidine 83 each contribute to the Zn(2+) site. Residues leucine 157–glutamate 289 form the GGDEF domain. Mg(2+) contacts are provided by aspartate 165 and isoleucine 166. Residues asparagine 173, histidine 178, aspartate 182, and tryptophan 195–glutamate 200 each bind substrate. Mg(2+) is bound at residue glutamate 208. Glutamate 208 (proton acceptor) is an active-site residue. Residues lysine 215, arginine 224, and arginine 228 each coordinate substrate.

Homodimer. Mg(2+) is required as a cofactor.

The catalysed reaction is 2 GTP = 3',3'-c-di-GMP + 2 diphosphate. The protein operates within purine metabolism; 3',5'-cyclic di-GMP biosynthesis. Allosterically regulated by zinc, which seems to regulate the activity of the catalytic GGDEF domains by impeding their mobility and thus preventing productive encounter of the two GTP substrates. Subject to product inhibition by c-di-GMP at a KI of 44 uM. Catalyzes the synthesis of cyclic-di-GMP (c-di-GMP) via the condensation of 2 GTP molecules. May act as a zinc sensor that controls, via c-di-GMP, post-translational events. Overexpression leads to a strong repression of swimming; swimming returnes to normal when residues 206-207 are both mutated to Ala. Overexpression also leads to a reduction in flagellar abundance and a 20-fold increase in c-di-GMP levels in vivo. Required for aminoglycoside-mediated induction of biofilm formation, it also plays a lesser role in biofilm production in response to other classes of translation inhibitors. The c-di-GMP produced by this enzyme up-regulates poly-GlcNAc production as well as the biofilm synthesis protein PgaD, although c-di-GMP is probably not the main inducing principle. C-di-GMP is a second messenger which controls cell surface-associated traits in bacteria. This is Diguanylate cyclase DgcZ from Escherichia coli (strain K12).